Here is a 931-residue protein sequence, read N- to C-terminus: Protein translocase subunit SecA (931 aa).

ATP is bound by residues glutamine 87, 105–109, and aspartate 515; that span reads GEGKT. Zn(2+) contacts are provided by cysteine 915, cysteine 917, cysteine 926, and histidine 927.

The protein belongs to the SecA family. Monomer and homodimer. Part of the essential Sec protein translocation apparatus which comprises SecA, SecYEG and auxiliary proteins SecDF-YajC and YidC. The cofactor is Zn(2+).

The protein resides in the cell inner membrane. Its subcellular location is the cytoplasm. The enzyme catalyses ATP + H2O + cellular proteinSide 1 = ADP + phosphate + cellular proteinSide 2.. In terms of biological role, part of the Sec protein translocase complex. Interacts with the SecYEG preprotein conducting channel. Has a central role in coupling the hydrolysis of ATP to the transfer of proteins into and across the cell membrane, serving both as a receptor for the preprotein-SecB complex and as an ATP-driven molecular motor driving the stepwise translocation of polypeptide chains across the membrane. The chain is Protein translocase subunit SecA from Burkholderia pseudomallei (strain K96243).